A 341-amino-acid polypeptide reads, in one-letter code: Putative methyltransferase YGR283C (341 aa).

It belongs to the class IV-like SAM-binding methyltransferase superfamily.

It localises to the nucleus. It is found in the nucleolus. This chain is Putative methyltransferase YGR283C, found in Saccharomyces cerevisiae (strain ATCC 204508 / S288c) (Baker's yeast).